The following is a 327-amino-acid chain: Cyclin-A3-3 (327 aa).

This sequence belongs to the cyclin family. Cyclin AB subfamily.

The polypeptide is Cyclin-A3-3 (CYCA3-3) (Arabidopsis thaliana (Mouse-ear cress)).